A 502-amino-acid chain; its full sequence is Aspartyl/glutamyl-tRNA(Asn/Gln) amidotransferase subunit B (502 aa).

It belongs to the GatB/GatE family. GatB subfamily. As to quaternary structure, heterotrimer of A, B and C subunits.

It catalyses the reaction L-glutamyl-tRNA(Gln) + L-glutamine + ATP + H2O = L-glutaminyl-tRNA(Gln) + L-glutamate + ADP + phosphate + H(+). It carries out the reaction L-aspartyl-tRNA(Asn) + L-glutamine + ATP + H2O = L-asparaginyl-tRNA(Asn) + L-glutamate + ADP + phosphate + 2 H(+). In terms of biological role, allows the formation of correctly charged Asn-tRNA(Asn) or Gln-tRNA(Gln) through the transamidation of misacylated Asp-tRNA(Asn) or Glu-tRNA(Gln) in organisms which lack either or both of asparaginyl-tRNA or glutaminyl-tRNA synthetases. The reaction takes place in the presence of glutamine and ATP through an activated phospho-Asp-tRNA(Asn) or phospho-Glu-tRNA(Gln). The sequence is that of Aspartyl/glutamyl-tRNA(Asn/Gln) amidotransferase subunit B from Arthrobacter sp. (strain FB24).